The sequence spans 1838 residues: Nuclear pore complex protein NUP205 (1838 aa).

This sequence belongs to the NUP186/NUP192/NUP205 family. Part of the nuclear pore complex (NPC). The NPC has an eight-fold symmetrical structure comprising a central transport channel and two rings, the cytoplasmic and nuclear rings, to which eight filaments are attached. The cytoplasmic filaments have loose ends, while the nuclear filaments are joined in a distal ring, forming a nuclear basket. NPCs are highly dynamic in configuration and composition, and can be devided in 3 subcomplexes, the NUP62 subcomplex, the NUP107-160 subcomplex and the NUP93 subcomplex, containing approximately 30 different nucleoporin proteins.

The protein localises to the nucleus envelope. It localises to the nucleus. The protein resides in the nuclear pore complex. The polypeptide is Nuclear pore complex protein NUP205 (Arabidopsis thaliana (Mouse-ear cress)).